Reading from the N-terminus, the 1706-residue chain is PR domain zinc finger protein 2 (1706 aa).

The 114-residue stretch at 27-140 (EEVRLFPSAV…PGEELLVWYN (114 aa)) folds into the SET domain. Positions 154-342 (ERASARSKRS…TPPPHTPRAR (189 aa)) are disordered. The span at 158–183 (ARSKRSSPKSRRGKKKSHENKNKGIR) shows a compositional bias: basic residues. Residues 185–199 (HPTQLKASELDSTFA) show a composition bias toward polar residues. The segment covering 258 to 294 (TDCEVNDVEEEELEEEEELEEEEEEELGEDGVEEADM) has biased composition (acidic residues). Residues 299 to 313 (SAKEPEIRCEEKPED) are compositionally biased toward basic and acidic residues. 2 C2H2-type zinc fingers span residues 355 to 377 (FPCQHCERKFATKQGLERHMHIH) and 385 to 407 (FKCKYCGKRFGTQINRRRHERRH). Disordered regions lie at residues 400–446 (RRRH…QLGQ), 492–542 (RRHQ…EEEG), and 618–655 (LLKDSPSSTNCESKKRRTASPPVLPKIKTETESDSTAP). At Ser-416 the chain carries Phosphoserine. The span at 427–439 (DGKGENVTSKDES) shows a compositional bias: basic and acidic residues. The C2H2-type 3 zinc-finger motif lies at 476–499 (HPCKYCKKVFGTHTNMRRHQRRVH). Ser-637 is subject to Phosphoserine. Glycyl lysine isopeptide (Lys-Gly) (interchain with G-Cter in SUMO2) cross-links involve residues Lys-645, Lys-684, and Lys-686. 3 disordered regions span residues 724-794 (TSSR…SPPC), 823-1075 (SGVK…SSVV), and 1088-1112 (VTFKQEESESEGLKPKEEAPPAGGQ). Residues 733 to 743 (SSPPSSPQHSP) show a composition bias toward low complexity. The residue at position 738 (Ser-738) is a Phosphoserine. A Glycyl lysine isopeptide (Lys-Gly) (interchain with G-Cter in SUMO2) cross-link involves residue Lys-769. 3 positions are modified to phosphoserine: Ser-776, Ser-780, and Ser-791. Over residues 823–832 (SGVKQKSEGT) the composition is skewed to polar residues. The span at 846–863 (SVHKKPCDSEGKEFKENH) shows a compositional bias: basic and acidic residues. Glycyl lysine isopeptide (Lys-Gly) (interchain with G-Cter in SUMO2) cross-links involve residues Lys-860 and Lys-870. 2 stretches are compositionally biased toward polar residues: residues 891 to 912 (SLPTETTPEVTRSPSPCKSPDT) and 943 to 952 (LQTASLSSGQ). Pro residues predominate over residues 962-983 (PSSPPPCPPVLTVATPPPPLLP). Polar residues predominate over residues 993–1009 (DASPQQCPSPFSNTTAQ). Low complexity predominate over residues 1010-1019 (SPLPILSPTV). Pro residues predominate over residues 1020 to 1030 (SPSPSPIPPVE). The span at 1034–1062 (SAASPGPPTLSSSSSSSSSFPSSSCSSTS) shows a compositional bias: low complexity. Over residues 1091–1106 (KQEESESEGLKPKEEA) the composition is skewed to basic and acidic residues. 3 C2H2-type zinc fingers span residues 1123-1145 (FICNVCESPFLSIKDLTKHLSVH), 1151-1174 (FKCEFCVQLFKVKTDLSEHRFLLH), and 1180-1203 (FVCSVCKKEFAFLCNLQQHQRDLH). Residues Lys-1136 and Lys-1140 each participate in a glycyl lysine isopeptide (Lys-Gly) (interchain with G-Cter in SUMO2) cross-link. Polar residues predominate over residues 1218 to 1227 (LRPQNFTDPS). The interval 1218–1251 (LRPQNFTDPSKANVEHMPSLPEEPLETSREEELN) is disordered. A Glycyl lysine isopeptide (Lys-Gly) (interchain with G-Cter in SUMO2) cross-link involves residue Lys-1269. The C2H2-type 7; atypical zinc-finger motif lies at 1321–1343 (IRCTKCGKGVDNMPELHKHILAC). Residues 1443–1465 (HICPYCDREFTYIGSLNKHAAFS) form a C2H2-type 8; atypical zinc finger. Residues 1466–1563 (CPKKPLSPSK…KKASSSSLRN (98 aa)) are disordered. Over residues 1474-1486 (SKRKVSHSSKKGG) the composition is skewed to basic residues. Positions 1487-1498 (HASSSSSDRNSS) are enriched in low complexity. Positions 1528–1544 (GPAQASLPSSSFRSRQN) are enriched in polar residues. Residues 1548 to 1563 (AASVKSKKASSSSLRN) show a composition bias toward low complexity.

It belongs to the class V-like SAM-binding methyltransferase superfamily. In terms of assembly, binds to the retinoblastoma protein (RB). Interacts with GATA3.

It is found in the nucleus. The catalysed reaction is L-lysyl-[histone] + S-adenosyl-L-methionine = N(6)-methyl-L-lysyl-[histone] + S-adenosyl-L-homocysteine + H(+). It carries out the reaction L-lysyl(9)-[histone H3] + 3 S-adenosyl-L-methionine = N(6),N(6),N(6)-trimethyl-L-lysyl(9)-[histone H3] + 3 S-adenosyl-L-homocysteine + 3 H(+). In terms of biological role, S-adenosyl-L-methionine-dependent histone methyltransferase that specifically methylates 'Lys-9' of histone H3. May function as a DNA-binding transcription factor. Binds to the macrophage-specific TPA-responsive element (MTE) of the HMOX1 (heme oxygenase 1) gene and may act as a transcriptional activator of this gene. The chain is PR domain zinc finger protein 2 (Prdm2) from Rattus norvegicus (Rat).